The primary structure comprises 738 residues: Melanotransferrin (738 aa).

The N-terminal stretch at 1–19 (MRGPSGALWLLLALRTVLG) is a signal peptide. The segment at 20 to 30 (GMEVRWCATSD) is antigenic epitope. 2 Transferrin-like domains span residues 23–357 (VRWC…GLLC) and 366–706 (LRWC…GMSS). Cystine bridges form between Cys-26–Cys-63 and Cys-36–Cys-54. Asn-38 carries an N-linked (GlcNAc...) asparagine glycan. Asp-78 and Tyr-107 together coordinate Fe(3+). Disulfide bonds link Cys-130/Cys-216, Cys-172/Cys-189, Cys-186/Cys-199, and Cys-257/Cys-271. Thr-132 serves as a coordination point for hydrogencarbonate. Asn-135 carries an N-linked (GlcNAc...) asparagine glycan. Residues Arg-136, Val-138, and Gly-139 each contribute to the hydrogencarbonate site. Position 210 (Tyr-210) interacts with Fe(3+). His-279, Ser-421, and Tyr-451 together coordinate Fe(3+). Ser-462 carries the phosphoserine; by FAM20C modification. Residue Asn-515 is glycosylated (N-linked (GlcNAc...) asparagine). Positions 556 and 625 each coordinate Fe(3+). Cys-709 is lipidated: GPI-anchor amidated cysteine. A propeptide spans 710–738 (SGAAAPAPGAPLLPLLLPALAARLLPPAL) (removed in mature form).

It belongs to the transferrin family. As to expression, found predominantly in human melanomas and in certain fetal tissues; also found in liver, epithelium, umbilical chord, placenta and sweat gland ducts.

Its subcellular location is the cell membrane. Involved in iron cellular uptake. Seems to be internalized and then recycled back to the cell membrane. Binds a single atom of iron per subunit. Could also bind zinc. The polypeptide is Melanotransferrin (Homo sapiens (Human)).